The chain runs to 66 residues: Large ribosomal subunit protein uL29 (66 aa).

It belongs to the universal ribosomal protein uL29 family.

In Borreliella burgdorferi (strain ZS7) (Borrelia burgdorferi), this protein is Large ribosomal subunit protein uL29.